A 284-amino-acid polypeptide reads, in one-letter code: NAD(P)H-hydrate epimerase (284 aa).

A mitochondrion-targeting transit peptide spans 1–55 (MSGLRTLLGLGLLVSSSRFPRVVARGGPRCPGPAWWAARPMHLGDSTMAGGTVKY). Residues 61-271 (AQAVDEELFN…DLEKKYQLNL (211 aa)) enclose the YjeF N-terminal domain. Residue 115 to 119 (NNGGD) coordinates (6S)-NADPHX. A K(+)-binding site is contributed by asparagine 116. Lysine 140 bears the N6-succinyllysine mark. Residue aspartate 181 participates in K(+) binding. (6S)-NADPHX-binding positions include 185–191 (GFSFKGA) and aspartate 214. Serine 217 contributes to the K(+) binding site.

It belongs to the NnrE/AIBP family. Homodimer. Interacts with APOA1 and APOA2. The cofactor is K(+). Undergoes physiological phosphorylation during sperm capacitation, downstream to PKA activation.

The protein localises to the mitochondrion. It localises to the secreted. The enzyme catalyses (6R)-NADHX = (6S)-NADHX. It carries out the reaction (6R)-NADPHX = (6S)-NADPHX. Its function is as follows. Catalyzes the epimerization of the S- and R-forms of NAD(P)HX, a damaged form of NAD(P)H that is a result of enzymatic or heat-dependent hydration. This is a prerequisite for the S-specific NAD(P)H-hydrate dehydratase to allow the repair of both epimers of NAD(P)HX. Accelerates cholesterol efflux from endothelial cells to high-density lipoprotein (HDL) and thereby regulates angiogenesis. The chain is NAD(P)H-hydrate epimerase from Monodelphis domestica (Gray short-tailed opossum).